The primary structure comprises 220 residues: Ribosome biogenesis protein 15 (220 aa).

Residues 1-82 are disordered; sequence MVKSTSKTST…KQANEKKSKD (82 aa). The span at 9 to 30 shows a compositional bias: basic and acidic residues; sequence STKETVTKQPTEEKPIQEKEEL. Residues 39 to 60 show a composition bias toward acidic residues; that stretch reads SDEEDEKDEDEIEGLAASDDEQ. The RRM domain maps to 91–169; sequence GIIYVSRLPH…HLLQVRVLPK (79 aa).

In terms of assembly, component of the pre-66S ribosomal particle. Interacts with NOP7 and RRP1.

The protein resides in the cytoplasm. Its subcellular location is the nucleus. The protein localises to the nucleolus. Functionally, involved in the biogenesis of the 60S ribosomal subunit. Required for pre-rRNA processing and cytokinesis. Associates with the precursors of the 25S and 5.8S rRNAs. The chain is Ribosome biogenesis protein 15 from Saccharomyces cerevisiae (strain ATCC 204508 / S288c) (Baker's yeast).